We begin with the raw amino-acid sequence, 1905 residues long: Bromodomain adjacent to zinc finger domain protein 2A (1905 aa).

Disordered stretches follow at residues 1–59 (MEME…NGLS) and 362–434 (TSIF…PTTS). Polar residues-rich tracts occupy residues 35-59 (TNGSPMNFPQQGKSLNGDVNVNGLS), 379-391 (LQDNSFDLNNGSD), and 399-420 (TQSSDFPPSLTQPAPDQSSTIQ). Position 507 is a phosphothreonine (threonine 507). Serine 509 is subject to Phosphoserine. An MBD domain is found at 546 to 617 (IATPEEVRLP…EHFSFSPRMP (72 aa)). The residue at position 548 (threonine 548) is a Phosphothreonine. Serine 613 bears the Phosphoserine mark. Residues 648–792 (ITGKRGRPRN…KEKEEVTKAK (145 aa)) are disordered. 2 consecutive DNA-binding regions (a.T hook) follow at residues 649 to 661 (TGKRGRPRNTEKA) and 670 to 682 (KRGRGRPPKVKIT). Basic and acidic residues predominate over residues 656–668 (RNTEKAKTKEVPK). Basic residues predominate over residues 669 to 678 (VKRGRGRPPK). Residue lysine 680 is modified to N6-acetyllysine; by KAT8. The span at 686–709 (NKTDNRPLKKLEAQETLNEEDKAK) shows a compositional bias: basic and acidic residues. A coiled-coil region spans residues 693–792 (LKKLEAQETL…KEKEEVTKAK (100 aa)). A compositionally biased stretch (basic residues) spans 710–721 (IAKSKKKMRQKV). Over residues 725 to 734 (ECQTTIQGQA) the composition is skewed to polar residues. Basic and acidic residues-rich tracts occupy residues 739 to 748 (KQETKSLKQK) and 756 to 792 (AEKEKGKTKQEKLKEKVKREKKEKVKMKEKEEVTKAK). Lysine 799 carries the N6-acetyllysine modification. The 66-residue stretch at 848–913 (SGAFSDCLTI…LKAALHDPGF (66 aa)) folds into the DDT domain. Lysine 866 is covalently cross-linked (Glycyl lysine isopeptide (Lys-Gly) (interchain with G-Cter in SUMO2)). Residue serine 1051 is modified to Phosphoserine. Glycyl lysine isopeptide (Lys-Gly) (interchain with G-Cter in SUMO2) cross-links involve residues lysine 1150 and lysine 1172. Disordered stretches follow at residues 1178–1220 (SNTT…PQAQ), 1283–1318 (LSSSVLTPDSSPGKLDPAPSQPPEEPEPDEAESSPD), and 1330–1412 (MPCN…RPPS). The residue at position 1184 (serine 1184) is a Phosphoserine. The a.T hook 3 DNA-binding region spans 1186–1198 (ARARGRPRKTKPG). Positions 1283-1293 (LSSSVLTPDSS) are enriched in low complexity. Positions 1306 to 1315 (EEPEPDEAES) are enriched in acidic residues. Positions 1345–1359 (DQPTPSPQQLASSKP) are enriched in polar residues. Serine 1397 is subject to Phosphoserine. The segment at residues 1404 to 1416 (PKRRGRPPSKFFK) is a DNA-binding region (a.T hook 4). At serine 1559 the chain carries Phosphoserine. Glycyl lysine isopeptide (Lys-Gly) (interchain with G-Cter in SUMO2) cross-links involve residues lysine 1676 and lysine 1709. Residues 1676–1726 (KVTCLVCRKGDNDEFLLLCDGCDRGCHIYCHRPKMEAVPEGDWFCTVCLAQ) form a PHD-type zinc finger. 2 disordered regions span residues 1734–1755 (QKPGFPKRGQKRKSGYSLNFSE) and 1769–1789 (ESPAAGPRYSEEGLSPSKRRR). A phosphoserine mark is found at serine 1747, serine 1770, serine 1783, and serine 1785. The Bromo domain maps to 1793 to 1897 (RNHHSDLTFC…RFFESRWEEF (105 aa)).

This sequence belongs to the WAL family. As to quaternary structure, component of the NoRC-1 ISWI chromatin remodeling complex at least composed of SMARCA1 and BAZ2A/TIP5, which regulates the spacing of histone octamers on the DNA template to facilitate access to DNA. Within the NoRC-1 ISWI chromatin remodeling complex interacts with SMARCA1; the interaction is direct. Component of the NoRC-5 ISWI chromatin remodeling complex (also called the NoRC nucleolar-remodeling complex), at least composed of SMARCA5/SNF2H and BAZ2A/TIP5, which regulates the spacing of histone octamers on the DNA template to facilitate access to DNA. Within the NoRC-5 ISWI chromatin remodeling complexes interacts with SMARCA5/SNF2H; the interaction is direct. Interacts with TTF1; the interaction is required for recruitment of the NoRC-5 ISWI chromatin remodeling complex to rDNA. Interacts with HDAC1. Interacts with SIN3A. Interacts with DNMT1 and DNM3B. Interacts with BEND3 and USP21. Post-translationally, acetylation at Lys-680 by KAT8/MOF promotes its dissociation from pRNA, affecting heterochromatin formation, nucleosome positioning and rDNA silencing. Deacetylation by SIRT1 in late S phase enhances pRNA-binding, allowing de novo DNA methylation and heterochromatin formation. Acetylation is high during S phase and declines to background levels in late S phase when the silent copies of rRNA genes are replicated. Ubiquitinated. Deubiquitinated by USP21 leading to its stabilization. As to expression, expressed at moderate levels in most tissues analyzed, including heart, brain, placenta, lung, skeletal muscle, kidney and pancreas.

Its subcellular location is the nucleus. It localises to the nucleolus. In terms of biological role, regulatory subunit of the ATP-dependent NoRC-1 and NoRC-5 ISWI chromatin remodeling complexes, which form ordered nucleosome arrays on chromatin and facilitate access to DNA during DNA-templated processes such as DNA replication, transcription, and repair. Both complexes regulate the spacing of nucleosomes along the chromatin and have the ability to slide mononucleosomes to the center of a DNA template. Directly stimulates the ATPase activity of SMARCA5 in the NoRC-5 ISWI chromatin remodeling complex. The NoRC-1 ISWI chromatin remodeling complex has a lower ATP hydrolysis rate than the NoRC-5 ISWI chromatin remodeling complex. Within the NoRC-5 ISWI chromatin remodeling complex, mediates silencing of a fraction of rDNA by recruiting histone-modifying enzymes and DNA methyltransferases, leading to heterochromatin formation and transcriptional silencing. In the complex, it plays a central role by being recruited to rDNA and by targeting chromatin modifying enzymes such as HDAC1, leading to repress RNA polymerase I transcription. Recruited to rDNA via its interaction with TTF1 and its ability to recognize and bind histone H4 acetylated on 'Lys-16' (H4K16ac), leading to deacetylation of H4K5ac, H4K8ac, H4K12ac but not H4K16ac. Specifically binds pRNAs, 150-250 nucleotide RNAs that are complementary in sequence to the rDNA promoter; pRNA-binding is required for heterochromatin formation and rDNA silencing. The polypeptide is Bromodomain adjacent to zinc finger domain protein 2A (BAZ2A) (Homo sapiens (Human)).